The chain runs to 311 residues: DNA-directed RNA polymerase subunit alpha (311 aa).

The interval 1–226 (MIEFEKPNIT…EHLDLFTNLT (226 aa)) is alpha N-terminal domain (alpha-NTD). An alpha C-terminal domain (alpha-CTD) region spans residues 243–311 (DDRILDRTIE…IDLGLGLKDK (69 aa)).

It belongs to the RNA polymerase alpha chain family. In terms of assembly, homodimer. The RNAP catalytic core consists of 2 alpha, 1 beta, 1 beta' and 1 omega subunit. When a sigma factor is associated with the core the holoenzyme is formed, which can initiate transcription.

It carries out the reaction RNA(n) + a ribonucleoside 5'-triphosphate = RNA(n+1) + diphosphate. Functionally, DNA-dependent RNA polymerase catalyzes the transcription of DNA into RNA using the four ribonucleoside triphosphates as substrates. The sequence is that of DNA-directed RNA polymerase subunit alpha from Streptococcus pneumoniae serotype 4 (strain ATCC BAA-334 / TIGR4).